The chain runs to 339 residues: Protoheme IX farnesyltransferase (339 aa).

Residues methionine 1–arginine 27 form a disordered region. A run of 9 helical transmembrane segments spans residues isoleucine 45–proline 65, glycine 67–leucine 87, alanine 117–valine 136, serine 140–leucine 159, glutamine 165–valine 185, tryptophan 191–leucine 211, valine 236–proline 256, leucine 257–valine 277, and proline 309–valine 329.

It belongs to the UbiA prenyltransferase family. Protoheme IX farnesyltransferase subfamily.

It is found in the cell membrane. The catalysed reaction is heme b + (2E,6E)-farnesyl diphosphate + H2O = Fe(II)-heme o + diphosphate. The protein operates within porphyrin-containing compound metabolism; heme O biosynthesis; heme O from protoheme: step 1/1. Converts heme B (protoheme IX) to heme O by substitution of the vinyl group on carbon 2 of heme B porphyrin ring with a hydroxyethyl farnesyl side group. The chain is Protoheme IX farnesyltransferase from Kineococcus radiotolerans (strain ATCC BAA-149 / DSM 14245 / SRS30216).